Reading from the N-terminus, the 291-residue chain is ATP phosphoribosyltransferase 1 (291 aa).

Belongs to the ATP phosphoribosyltransferase family. Long subfamily. Mg(2+) serves as cofactor.

It is found in the cytoplasm. It catalyses the reaction 1-(5-phospho-beta-D-ribosyl)-ATP + diphosphate = 5-phospho-alpha-D-ribose 1-diphosphate + ATP. The protein operates within amino-acid biosynthesis; L-histidine biosynthesis; L-histidine from 5-phospho-alpha-D-ribose 1-diphosphate: step 1/9. Feedback inhibited by histidine. Catalyzes the condensation of ATP and 5-phosphoribose 1-diphosphate to form N'-(5'-phosphoribosyl)-ATP (PR-ATP). Has a crucial role in the pathway because the rate of histidine biosynthesis seems to be controlled primarily by regulation of HisG enzymatic activity. The polypeptide is ATP phosphoribosyltransferase 1 (Geobacter sulfurreducens (strain ATCC 51573 / DSM 12127 / PCA)).